The chain runs to 470 residues: Uronate isomerase (470 aa).

This sequence belongs to the metallo-dependent hydrolases superfamily. Uronate isomerase family.

The catalysed reaction is D-glucuronate = D-fructuronate. It catalyses the reaction aldehydo-D-galacturonate = keto-D-tagaturonate. The protein operates within carbohydrate metabolism; pentose and glucuronate interconversion. This chain is Uronate isomerase, found in Vibrio vulnificus (strain YJ016).